Reading from the N-terminus, the 207-residue chain is Thiamine-phosphate synthase (207 aa).

4-amino-2-methyl-5-(diphosphooxymethyl)pyrimidine-binding positions include 41–45 (QLRLK) and Asn-73. Mg(2+)-binding residues include Asp-74 and Asp-93. Thr-111 lines the 4-amino-2-methyl-5-(diphosphooxymethyl)pyrimidine pocket. 138–140 (TKT) is a 2-[(2R,5Z)-2-carboxy-4-methylthiazol-5(2H)-ylidene]ethyl phosphate binding site. Lys-141 provides a ligand contact to 4-amino-2-methyl-5-(diphosphooxymethyl)pyrimidine. Residue Gly-168 coordinates 2-[(2R,5Z)-2-carboxy-4-methylthiazol-5(2H)-ylidene]ethyl phosphate.

It belongs to the thiamine-phosphate synthase family. Mg(2+) is required as a cofactor.

The enzyme catalyses 2-[(2R,5Z)-2-carboxy-4-methylthiazol-5(2H)-ylidene]ethyl phosphate + 4-amino-2-methyl-5-(diphosphooxymethyl)pyrimidine + 2 H(+) = thiamine phosphate + CO2 + diphosphate. It carries out the reaction 2-(2-carboxy-4-methylthiazol-5-yl)ethyl phosphate + 4-amino-2-methyl-5-(diphosphooxymethyl)pyrimidine + 2 H(+) = thiamine phosphate + CO2 + diphosphate. It catalyses the reaction 4-methyl-5-(2-phosphooxyethyl)-thiazole + 4-amino-2-methyl-5-(diphosphooxymethyl)pyrimidine + H(+) = thiamine phosphate + diphosphate. It participates in cofactor biosynthesis; thiamine diphosphate biosynthesis; thiamine phosphate from 4-amino-2-methyl-5-diphosphomethylpyrimidine and 4-methyl-5-(2-phosphoethyl)-thiazole: step 1/1. In terms of biological role, condenses 4-methyl-5-(beta-hydroxyethyl)thiazole monophosphate (THZ-P) and 2-methyl-4-amino-5-hydroxymethyl pyrimidine pyrophosphate (HMP-PP) to form thiamine monophosphate (TMP). The chain is Thiamine-phosphate synthase from Pelagibacter ubique (strain HTCC1062).